The sequence spans 178 residues: Peptide methionine sulfoxide reductase MsrA (178 aa).

Cys14 is a catalytic residue.

It belongs to the MsrA Met sulfoxide reductase family.

It carries out the reaction L-methionyl-[protein] + [thioredoxin]-disulfide + H2O = L-methionyl-(S)-S-oxide-[protein] + [thioredoxin]-dithiol. The enzyme catalyses [thioredoxin]-disulfide + L-methionine + H2O = L-methionine (S)-S-oxide + [thioredoxin]-dithiol. Its function is as follows. Has an important function as a repair enzyme for proteins that have been inactivated by oxidation. Catalyzes the reversible oxidation-reduction of methionine sulfoxide in proteins to methionine. This is Peptide methionine sulfoxide reductase MsrA from Bacillus pumilus (strain SAFR-032).